The following is a 422-amino-acid chain: Probable glycosidase CRR1 (422 aa).

A signal peptide spans 1-20; it reads MRISILQLVPVVGYIGFALG. The 273-residue stretch at 67-339 folds into the GH16 domain; sequence DEESCAPIPA…WENSPDIIEK (273 aa). The Nucleophile role is filled by Glu-217. Glu-221 acts as the Proton donor in catalysis.

It belongs to the glycosyl hydrolase 16 family. CRR1 subfamily.

It localises to the spore wall. Functionally, spore specific glycosidase involved in spore wall assembly during sporulation. May be involved in copper import. The polypeptide is Probable glycosidase CRR1 (CRR1) (Saccharomyces cerevisiae (strain ATCC 204508 / S288c) (Baker's yeast)).